The following is a 412-amino-acid chain: ATP phosphoribosyltransferase regulatory subunit (412 aa).

The protein belongs to the class-II aminoacyl-tRNA synthetase family. HisZ subfamily. As to quaternary structure, heteromultimer composed of HisG and HisZ subunits.

It localises to the cytoplasm. The protein operates within amino-acid biosynthesis; L-histidine biosynthesis; L-histidine from 5-phospho-alpha-D-ribose 1-diphosphate: step 1/9. Its function is as follows. Required for the first step of histidine biosynthesis. May allow the feedback regulation of ATP phosphoribosyltransferase activity by histidine. In Dehalococcoides mccartyi (strain CBDB1), this protein is ATP phosphoribosyltransferase regulatory subunit.